The sequence spans 131 residues: Phosphoribosyl-AMP cyclohydrolase (131 aa).

Asp89 contributes to the Mg(2+) binding site. Cys90 contributes to the Zn(2+) binding site. 2 residues coordinate Mg(2+): Asp91 and Asp93. Zn(2+)-binding residues include Cys106 and Cys113.

Belongs to the PRA-CH family. In terms of assembly, homodimer. Mg(2+) serves as cofactor. It depends on Zn(2+) as a cofactor.

The protein resides in the cytoplasm. It carries out the reaction 1-(5-phospho-beta-D-ribosyl)-5'-AMP + H2O = 1-(5-phospho-beta-D-ribosyl)-5-[(5-phospho-beta-D-ribosylamino)methylideneamino]imidazole-4-carboxamide. It functions in the pathway amino-acid biosynthesis; L-histidine biosynthesis; L-histidine from 5-phospho-alpha-D-ribose 1-diphosphate: step 3/9. Its function is as follows. Catalyzes the hydrolysis of the adenine ring of phosphoribosyl-AMP. The chain is Phosphoribosyl-AMP cyclohydrolase from Bifidobacterium longum (strain DJO10A).